Here is a 307-residue protein sequence, read N- to C-terminus: Putative lipid kinase SERP0390 (307 aa).

The region spanning 3-139 (QPYNHGVLFY…YDVLKVNDLY (137 aa)) is the DAGKc domain. ATP is bound by residues Ser44, 74-80 (GDGTLNE), and Thr101. Positions 220, 223, and 225 each coordinate Mg(2+). The Proton acceptor role is filled by Glu281.

Belongs to the diacylglycerol/lipid kinase family. Mg(2+) is required as a cofactor.

Functionally, may catalyze the ATP-dependent phosphorylation of lipids other than diacylglycerol (DAG). This chain is Putative lipid kinase SERP0390, found in Staphylococcus epidermidis (strain ATCC 35984 / DSM 28319 / BCRC 17069 / CCUG 31568 / BM 3577 / RP62A).